The primary structure comprises 315 residues: tRNA pseudouridine synthase B (315 aa).

Asp-47 (nucleophile) is an active-site residue.

The protein belongs to the pseudouridine synthase TruB family. Type 1 subfamily.

It carries out the reaction uridine(55) in tRNA = pseudouridine(55) in tRNA. In terms of biological role, responsible for synthesis of pseudouridine from uracil-55 in the psi GC loop of transfer RNAs. The protein is tRNA pseudouridine synthase B of Shewanella pealeana (strain ATCC 700345 / ANG-SQ1).